The chain runs to 220 residues: 1-Cys peroxiredoxin B (220 aa).

One can recognise a Thioredoxin domain in the interval 4–165 (LTLGDVVPDL…VLRATDALLT (162 aa)). C46 acts as the Cysteine sulfenic acid (-SOH) intermediate in catalysis. A Bipartite nuclear localization signal motif is present at residues 195-218 (KARFPAGFETAQLPSNKCYLRFTQ).

Belongs to the peroxiredoxin family. Prx6 subfamily.

It is found in the nucleus. It localises to the cytoplasm. It catalyses the reaction a hydroperoxide + [thioredoxin]-dithiol = an alcohol + [thioredoxin]-disulfide + H2O. Thiol-specific peroxidase that catalyzes the reduction of hydrogen peroxide and organic hydroperoxides to water and alcohols, respectively. Seems to contribute to the inhibition of germination during stress. The protein is 1-Cys peroxiredoxin B of Oryza sativa subsp. japonica (Rice).